Here is a 74-residue protein sequence, read N- to C-terminus: Control protein C.MunI (74 aa).

Positions 12–67 (LKKLRKEKTDLSQESFAAQIDLDRTYYSSIENGKRNVSLVNLEKISAGLGITLSEL) constitute an HTH cro/C1-type domain. Residues 23–42 (SQESFAAQIDLDRTYYSSIE) constitute a DNA-binding region (H-T-H motif).

In terms of biological role, probably controls expression of its associated restriction-modification system MunI. This is Control protein C.MunI from Mycoplasma sp.